A 114-amino-acid chain; its full sequence is MTANVSGIGSVLQQMQAMAAQASGGVASPAAALAGSGAATAGTFASAMKASLDKISGDQQRALGEAQAFEVGAANVSLNDVMVDMQKANIGFQFGLQVRNKLVSAYNDIMQMSV.

Belongs to the FliE family.

Its subcellular location is the bacterial flagellum basal body. This chain is Flagellar hook-basal body complex protein FliE, found in Burkholderia multivorans (strain ATCC 17616 / 249).